A 692-amino-acid polypeptide reads, in one-letter code: Glycine--tRNA ligase beta subunit (692 aa).

Belongs to the class-II aminoacyl-tRNA synthetase family. In terms of assembly, tetramer of two alpha and two beta subunits.

It localises to the cytoplasm. It catalyses the reaction tRNA(Gly) + glycine + ATP = glycyl-tRNA(Gly) + AMP + diphosphate. This Oceanobacillus iheyensis (strain DSM 14371 / CIP 107618 / JCM 11309 / KCTC 3954 / HTE831) protein is Glycine--tRNA ligase beta subunit.